The following is a 118-amino-acid chain: Small ribosomal subunit protein uS13 (118 aa).

The disordered stretch occupies residues 91-118; that stretch reads HRRSLPVRGQRTKTNARTRKGPRKPIKA.

It belongs to the universal ribosomal protein uS13 family. As to quaternary structure, part of the 30S ribosomal subunit. Forms a loose heterodimer with protein S19. Forms two bridges to the 50S subunit in the 70S ribosome.

Its function is as follows. Located at the top of the head of the 30S subunit, it contacts several helices of the 16S rRNA. In the 70S ribosome it contacts the 23S rRNA (bridge B1a) and protein L5 of the 50S subunit (bridge B1b), connecting the 2 subunits; these bridges are implicated in subunit movement. Contacts the tRNAs in the A and P-sites. This Francisella philomiragia subsp. philomiragia (strain ATCC 25017 / CCUG 19701 / FSC 153 / O#319-036) protein is Small ribosomal subunit protein uS13.